The following is a 178-amino-acid chain: Bifunctional protein PyrR (178 aa).

Substrate-binding positions include 42 to 43 (TR), Arg-83, 103 to 111 (DDVIYKGRT), Arg-136, and Val-160. The short motif at 99 to 111 (VVLVDDVIYKGRT) is the PRPP-binding element.

It belongs to the purine/pyrimidine phosphoribosyltransferase family. PyrR subfamily.

It carries out the reaction UMP + diphosphate = 5-phospho-alpha-D-ribose 1-diphosphate + uracil. Regulates the transcription of the pyrimidine nucleotide (pyr) operon in response to exogenous pyrimidines. Functionally, also displays a weak uracil phosphoribosyltransferase activity which is not physiologically significant. The protein is Bifunctional protein PyrR of Synechocystis sp. (strain ATCC 27184 / PCC 6803 / Kazusa).